The chain runs to 333 residues: T-cell surface glycoprotein CD1b-1 (333 aa).

The signal sequence occupies residues 1 to 18 (MLLLPLLLLAVIVPGGDN). Over 19 to 302 (EDVFQGPTSF…LYWGHPTSTG (284 aa)) the chain is Extracellular. 4 N-linked (GlcNAc...) asparagine glycosylation sites follow: Asn38, Asn75, Asn146, and Asn258. Intrachain disulfides connect Cys120–Cys184 and Cys224–Cys279. Residues 185–295 (PRYFLSVLDA…LGDQDIVLYW (111 aa)) enclose the Ig-like domain. The chain crosses the membrane as a helical span at residues 303–323 (LIFVAIIVSSLILLICLALWF). Topologically, residues 324 to 333 (WRRWSYLTIL) are cytoplasmic. The Internalization signal motif lies at 329-332 (YLTI).

In terms of assembly, heterodimer with B2M (beta-2-microglobulin). Interacts with saposin C.

It localises to the cell membrane. The protein localises to the endosome membrane. Its subcellular location is the lysosome membrane. Functionally, antigen-presenting protein that binds self and non-self lipid and glycolipid antigens and presents them to T-cell receptors on natural killer T-cells. The polypeptide is T-cell surface glycoprotein CD1b-1 (Ovis aries (Sheep)).